A 363-amino-acid polypeptide reads, in one-letter code: 3-isopropylmalate dehydrogenase (363 aa).

79–92 (GPKWEHLPPNDQPE) is an NAD(+) binding site. Residues Arg100, Arg110, Arg139, and Asp228 each contribute to the substrate site. Residues Asp228, Asp252, and Asp256 each coordinate Mg(2+). 286–298 (GSAPDIAGKNIAN) is an NAD(+) binding site.

This sequence belongs to the isocitrate and isopropylmalate dehydrogenases family. LeuB type 1 subfamily. Homodimer. Requires Mg(2+) as cofactor. Mn(2+) is required as a cofactor.

The protein localises to the cytoplasm. It carries out the reaction (2R,3S)-3-isopropylmalate + NAD(+) = 4-methyl-2-oxopentanoate + CO2 + NADH. Its pathway is amino-acid biosynthesis; L-leucine biosynthesis; L-leucine from 3-methyl-2-oxobutanoate: step 3/4. In terms of biological role, catalyzes the oxidation of 3-carboxy-2-hydroxy-4-methylpentanoate (3-isopropylmalate) to 3-carboxy-4-methyl-2-oxopentanoate. The product decarboxylates to 4-methyl-2 oxopentanoate. The polypeptide is 3-isopropylmalate dehydrogenase (Vibrio vulnificus (strain YJ016)).